The primary structure comprises 276 residues: NH(3)-dependent NAD(+) synthetase (276 aa).

43 to 50 is a binding site for ATP; sequence GISGGVDS. Aspartate 49 provides a ligand contact to Mg(2+). Residue arginine 146 coordinates deamido-NAD(+). Residue threonine 166 coordinates ATP. Mg(2+) is bound at residue glutamate 171. The deamido-NAD(+) site is built by lysine 179 and aspartate 186. Residues lysine 195 and threonine 217 each contribute to the ATP site. A deamido-NAD(+)-binding site is contributed by 266–267; the sequence is HK.

This sequence belongs to the NAD synthetase family. Homodimer.

It carries out the reaction deamido-NAD(+) + NH4(+) + ATP = AMP + diphosphate + NAD(+) + H(+). It participates in cofactor biosynthesis; NAD(+) biosynthesis; NAD(+) from deamido-NAD(+) (ammonia route): step 1/1. Functionally, catalyzes the ATP-dependent amidation of deamido-NAD to form NAD. Uses ammonia as a nitrogen source. The chain is NH(3)-dependent NAD(+) synthetase from Shewanella pealeana (strain ATCC 700345 / ANG-SQ1).